We begin with the raw amino-acid sequence, 320 residues long: Atrochrysone carboxyl ACP thioesterase (320 aa).

Positions 103, 105, 107, and 108 each coordinate Zn(2+). The active-site Proton donor/acceptor is Asp107.

The protein belongs to the metallo-beta-lactamase superfamily. Zn(2+) is required as a cofactor.

The catalysed reaction is atrochrysone carboxyl-[ACP] + H2O = atrochrysone carboxylate + holo-[ACP] + H(+). It functions in the pathway secondary metabolite biosynthesis. Its function is as follows. Atrochrysone carboxyl ACP thioesterase; part of the gene cluster that mediates the biosynthesis of geodin, an intermediate in the biosynthesis of other natural products. The pathway begins with the synthesis of atrochrysone thioester by the polyketide synthase (PKS) gedC. The atrochrysone carboxyl ACP thioesterase gedB then breaks the thioester bond and releases the atrochrysone carboxylic acid from gedC. The atrochrysone carboxylic acid is then converted to atrochrysone which is further transformed into emodinanthrone. The next step is performed by the emodinanthrone oxygenase gedH that catalyzes the oxidation of emodinanthrone to emodin. Emodin O-methyltransferase encoded probably by gedA then catalyzes methylation of the 8-hydroxy group of emodin to form questin. Ring cleavage of questin by questin oxidase gedK leads to desmethylsulochrin via several intermediates including questin epoxide. Another methylation step probably catalyzed by methyltransferase gedG leads to the formation of sulochrin which is further converted to dihydrogeodin by the sulochrin halogenase gedL. Finally, the dihydrogeodin oxidase gedJ catalyzes the stereospecific phenol oxidative coupling reaction converting dihydrogeodin to geodin. The polypeptide is Atrochrysone carboxyl ACP thioesterase (Aspergillus terreus (strain NIH 2624 / FGSC A1156)).